Reading from the N-terminus, the 291-residue chain is Transmembrane protein 41B (291 aa).

Residues 1 to 39 (MAKGRVAERSQLGAHHTTPVGDGAAGTRGLAAPGSRDHQ) are disordered. At Thr-18 the chain carries Phosphothreonine. Residue Ser-35 is modified to Phosphoserine. The next 6 membrane-spanning stretches (helical) occupy residues 52–72 (MSLLILVSIFLSAAFVMFLVY), 109–129 (FYVQVLVAYFATYIFLQTFAI), 147–169 (LALFLVCLCSGLGASFCYMLSYL), 197–217 (LINYIIFLRITPFLPNWFINI), 225–245 (PLKVFFIGTFLGVAPPSFVAI), and 262–282 (SWNSIFILMILAVLSILPAIF). The segment at 140 to 251 (GFLYPFPLAL…FVAIKAGTTL (112 aa)) is VTT domain; required for its function in autophagy.

The protein belongs to the TMEM41 family. In terms of assembly, interacts with VMP1. Interacts with COPA, COPB1, VDAC1 and ERLIN2. Interacts with ATG2A. Interacts with SURF4. As to quaternary structure, (Microbial infection) Interacts with Zika virus NS4A protein and Yellow fever virus NS4B protein.

The protein resides in the endoplasmic reticulum membrane. It is found in the endomembrane system. It localises to the cytoplasm. The enzyme catalyses a 1,2-diacyl-sn-glycero-3-phospho-L-serine(in) = a 1,2-diacyl-sn-glycero-3-phospho-L-serine(out). It catalyses the reaction cholesterol(in) = cholesterol(out). The catalysed reaction is a 1,2-diacyl-sn-glycero-3-phosphocholine(in) = a 1,2-diacyl-sn-glycero-3-phosphocholine(out). It carries out the reaction a 1,2-diacyl-sn-glycero-3-phosphoethanolamine(in) = a 1,2-diacyl-sn-glycero-3-phosphoethanolamine(out). In terms of biological role, phospholipid scramblase involved in lipid homeostasis and membrane dynamics processes. Has phospholipid scramblase activity toward cholesterol and phosphatidylserine, as well as phosphatidylethanolamine and phosphatidylcholine. Required for autophagosome formation: participates in early stages of autophagosome biogenesis at the endoplasmic reticulum (ER) membrane by reequilibrating the leaflets of the ER as lipids are extracted by ATG2 (ATG2A or ATG2B) to mediate autophagosome assembly. In addition to autophagy, involved in other processes in which phospholipid scramblase activity is required. Required for normal motor neuron development. (Microbial infection) Critical host factor required for infection by human coronaviruses SARS-CoV-2, HCoV-OC43, HCoV-NL63, and HCoV-229E, as well as all flaviviruses tested such as Zika virus and Yellow fever virus. Required post-entry of the virus to facilitate the ER membrane remodeling necessary to form replication organelles. The sequence is that of Transmembrane protein 41B from Homo sapiens (Human).